Reading from the N-terminus, the 244-residue chain is uncharacterized protein (244 aa).

The disordered stretch occupies residues 30 to 49 (RETNESPKSQNPSEEATTVN). Polar residues predominate over residues 35–49 (SPKSQNPSEEATTVN). 4 helical membrane-spanning segments follow: residues 96-116 (LWGT…LSNS), 128-148 (LLFI…FGLF), 171-191 (GFFI…TIAF), and 194-214 (FVTI…HPLS). The interval 224–244 (QLDGSGERKTDSSLVHQNPPN) is disordered. A compositionally biased stretch (polar residues) spans 235–244 (SSLVHQNPPN).

It is found in the nucleus membrane. This is an uncharacterized protein from Schizosaccharomyces pombe (strain 972 / ATCC 24843) (Fission yeast).